The primary structure comprises 572 residues: 2-isopropylmalate synthase (572 aa).

The 275-residue stretch at Pro-31–Asn-305 folds into the Pyruvate carboxyltransferase domain. Mg(2+) is bound by residues Asp-40, His-244, His-246, and Asn-280. Positions Asn-437–Val-572 are regulatory domain.

Belongs to the alpha-IPM synthase/homocitrate synthase family. LeuA type 2 subfamily. In terms of assembly, homodimer. It depends on Mg(2+) as a cofactor.

The protein localises to the cytoplasm. It catalyses the reaction 3-methyl-2-oxobutanoate + acetyl-CoA + H2O = (2S)-2-isopropylmalate + CoA + H(+). Its pathway is amino-acid biosynthesis; L-leucine biosynthesis; L-leucine from 3-methyl-2-oxobutanoate: step 1/4. Its function is as follows. Catalyzes the condensation of the acetyl group of acetyl-CoA with 3-methyl-2-oxobutanoate (2-ketoisovalerate) to form 3-carboxy-3-hydroxy-4-methylpentanoate (2-isopropylmalate). In Paraburkholderia xenovorans (strain LB400), this protein is 2-isopropylmalate synthase.